The sequence spans 260 residues: Small ribosomal subunit protein eS1 (260 aa).

Position 2 is an N-acetylalanine; partial (alanine 2).

The protein belongs to the eukaryotic ribosomal protein eS1 family. Component of the small ribosomal subunit. Mature ribosomes consist of a small (40S) and a large (60S) subunit. The 40S subunit contains about 33 different proteins and 1 molecule of RNA (18S). The 60S subunit contains about 49 different proteins and 3 molecules of RNA (25S, 5.8S and 5S).

Its subcellular location is the cytoplasm. The sequence is that of Small ribosomal subunit protein eS1 from Mycosarcoma maydis (Corn smut fungus).